Reading from the N-terminus, the 232-residue chain is Putative homeobox protein NANOG2 (232 aa).

A disordered region spans residues 1–39 (MDLPIQDSHDSSTSPKGKQPTTAEKSATKKEDKVPVKKQ). The span at 11 to 25 (SSTSPKGKQPTTAEK) shows a compositional bias: polar residues. Residues 26–35 (SATKKEDKVP) are compositionally biased toward basic and acidic residues. 8 repeat units span residues 123-127 (WSNQT), 128-132 (WNNST), 133-137 (WSNQT), 143-147 (WSNHS), 148-152 (WNTQT), 153-157 (WCTQS), 158-162 (WNNQA), and 163-167 (WNSPF). The segment at 123–167 (WSNQTWNNSTWSNQTQNIQSWSNHSWNTQTWCTQSWNNQAWNSPF) is 8 X repeats starting with a Trp in each unit. The sufficient for transactivation activity stretch occupies residues 123–167 (WSNQTWNNSTWSNQTQNIQSWSNHSWNTQTWCTQSWNNQAWNSPF). The tract at residues 168 to 232 (YNCGEESLQS…YSMNMQPEDV (65 aa)) is sufficient for strong transactivation activity.

It belongs to the Nanog homeobox family.

The protein localises to the nucleus. Functionally, probable transcriptional regulator. The polypeptide is Putative homeobox protein NANOG2 (NANOGP1) (Homo sapiens (Human)).